We begin with the raw amino-acid sequence, 360 residues long: 1-deoxy-D-xylulose 5-phosphate reductoisomerase (360 aa).

NADPH-binding residues include serine 7, glycine 8, serine 9, isoleucine 10, and asparagine 115. Lysine 116 lines the 1-deoxy-D-xylulose 5-phosphate pocket. Residue glutamate 117 participates in NADPH binding. Position 135 (aspartate 135) interacts with Mn(2+). Positions 136, 137, 159, and 182 each coordinate 1-deoxy-D-xylulose 5-phosphate. Glutamate 137 is a binding site for Mn(2+). Glycine 188 is a binding site for NADPH. 1-deoxy-D-xylulose 5-phosphate is bound by residues serine 195, asparagine 200, lysine 201, and glutamate 204. Residue glutamate 204 participates in Mn(2+) binding.

Belongs to the DXR family. It depends on Mg(2+) as a cofactor. Mn(2+) is required as a cofactor.

The catalysed reaction is 2-C-methyl-D-erythritol 4-phosphate + NADP(+) = 1-deoxy-D-xylulose 5-phosphate + NADPH + H(+). It participates in isoprenoid biosynthesis; isopentenyl diphosphate biosynthesis via DXP pathway; isopentenyl diphosphate from 1-deoxy-D-xylulose 5-phosphate: step 1/6. Its function is as follows. Catalyzes the NADPH-dependent rearrangement and reduction of 1-deoxy-D-xylulose-5-phosphate (DXP) to 2-C-methyl-D-erythritol 4-phosphate (MEP). In Campylobacter fetus subsp. fetus (strain 82-40), this protein is 1-deoxy-D-xylulose 5-phosphate reductoisomerase.